Reading from the N-terminus, the 262-residue chain is Integral membrane protein 2B (262 aa).

Over 1-49 (MVKVSFNSALAHKEAANKEEENSQVLILPPDAKEPEDVVVPAGHKRAWC) the chain is Cytoplasmic. Residues 50–70 (WCMCFGLAFMLAGVILGGAYL) traverse the membrane as a helical; Signal-anchor for type II membrane protein segment. The Lumenal portion of the chain corresponds to 71–262 (YKYFAFQQGG…FAMETLICEQ (192 aa)). The BRICHOS domain occupies 132–226 (FADSDPADIV…LCRGKETYKL (95 aa)). Disulfide bonds link C159/C218 and C243/C260. The N-linked (GlcNAc...) asparagine glycan is linked to N165.

This sequence belongs to the ITM2 family. Homodimer; disulfide-linked. As to expression, expressed in areas of chondro-osteogenic transition and widely in the nervous system.

It is found in the golgi apparatus membrane. Its subcellular location is the cell membrane. The protein resides in the endosome membrane. Its function is as follows. Plays a role in the induction of neurite outgrowth. The chain is Integral membrane protein 2B (ITM2B) from Gallus gallus (Chicken).